Here is a 156-residue protein sequence, read N- to C-terminus: Small ribosomal subunit protein uS7 (156 aa).

This sequence belongs to the universal ribosomal protein uS7 family. Part of the 30S ribosomal subunit. Contacts proteins S9 and S11.

Functionally, one of the primary rRNA binding proteins, it binds directly to 16S rRNA where it nucleates assembly of the head domain of the 30S subunit. Is located at the subunit interface close to the decoding center, probably blocks exit of the E-site tRNA. The sequence is that of Small ribosomal subunit protein uS7 from Anoxybacillus flavithermus (strain DSM 21510 / WK1).